Consider the following 350-residue polypeptide: Purine-rich element-binding protein gamma (350 aa).

Disordered regions lie at residues Met1–Glu59 and Gly136–Ser172. Over residues Gly9–Gly27 the composition is skewed to gly residues. Over residues Ala47–Glu59 the composition is skewed to polar residues. Residues Ser54–Arg296 mediate DNA binding. Positions His137–Ser149 are enriched in basic and acidic residues. Phosphoserine is present on residues Ser163, Ser166, and Ser342.

Belongs to the PUR DNA-binding protein family. Isoform 1 is expressed in testis. Isoform 2 is expressed in blastocyst and kidney.

It localises to the nucleus. The protein is Purine-rich element-binding protein gamma (Purg) of Mus musculus (Mouse).